A 383-amino-acid chain; its full sequence is Guanine nucleotide-binding protein alpha-1 subunit (383 aa).

The interval 1–20 (MGLLCSRSRHHTEDTDENTQ) is disordered. G2 is lipidated: N-myristoyl glycine. The S-palmitoyl cysteine moiety is linked to residue C5. Residues 37–383 (HIRKLLLLGA…RRNLLEAGLL (347 aa)) enclose the G-alpha domain. A G1 motif region spans residues 40–53 (KLLLLGAGESGKST). Residues E48, S49, G50, K51, S52, T53, D162, L187, Y188, T193, G221, N287, K288, D290, and A355 each coordinate GTP. Mg(2+) is bound at residue S52. The tract at residues 185–193 (DVLYARVRT) is G2 motif. T193 contacts Mg(2+). The interval 214-223 (YRLFDVGGQR) is G3 motif. The G4 motif stretch occupies residues 283 to 290 (MLFLNKFD). The segment at 353 to 358 (TTALDQ) is G5 motif.

It belongs to the G-alpha family. As to quaternary structure, g proteins are composed of 3 units; alpha, beta and gamma. The alpha chain contains the guanine nucleotide binding site. Interacts with RGS1, THF1, the pirin protein PRN1, GTG1 and GTG2. Binds to GCR1. May interact with ADT3. No interactions with RACK1A, RACK1B or RACK1C. Interacts with PLDALPHA1. Interacts with CAND2/PMTR1. Mg(2+) serves as cofactor. As to expression, more abundant in roots and/or leaves.

The protein resides in the cell membrane. Functionally, exhibits a fast rate of basal nucleotide exchange. Guanine nucleotide-binding proteins (G proteins) are involved as modulators or transducers in various transmembrane signaling systems. Together with GCR1, may regulate the cell cycle via a signaling cascade that uses phosphatidylinositol-specific phospholipase C (PI-PLC) as an effector and inositol 1,4,5-trisphosphate (IP(3)) as a second messenger. Promotes abscisic acid (ABA) responses in guard cells. Involved in the blue light (BL) signaling. Together with GCR1 and ADT3, required for BL-mediated synthesis of phenylpyruvate and subsequently of phenylalanine (Phe), in etiolated seedlings. Modulates root architecture (e.g. lateral root formation). Negatively regulated by RGS1. In collaboration with CAND2/PMTR1, regulates the melatonin-mediated stomatal closure involving H(2)O(2) and Ca(2+) signals. This Arabidopsis thaliana (Mouse-ear cress) protein is Guanine nucleotide-binding protein alpha-1 subunit.